The chain runs to 147 residues: uncharacterized protein (147 aa).

2 consecutive 4Fe-4S ferredoxin-type domains span residues 80–109 (WYPKIDYNRCKNCEKCISFCPRGVYDAENG) and 110–141 (KVVVKYPYSCIVNCNACSIMCCENNAIIFPDE). [4Fe-4S] cluster is bound by residues C89, C92, C95, C99, C119, C123, C126, and C130.

It depends on [4Fe-4S] cluster as a cofactor.

This is an uncharacterized protein from Methanocaldococcus jannaschii (strain ATCC 43067 / DSM 2661 / JAL-1 / JCM 10045 / NBRC 100440) (Methanococcus jannaschii).